The following is a 419-amino-acid chain: 3-isopropylmalate dehydratase large subunit (419 aa).

Residues Cys300, Cys360, and Cys363 each contribute to the [4Fe-4S] cluster site.

The protein belongs to the aconitase/IPM isomerase family. LeuC type 2 subfamily. Heterodimer of LeuC and LeuD. It depends on [4Fe-4S] cluster as a cofactor.

The enzyme catalyses (2R,3S)-3-isopropylmalate = (2S)-2-isopropylmalate. It participates in amino-acid biosynthesis; L-leucine biosynthesis; L-leucine from 3-methyl-2-oxobutanoate: step 2/4. Its function is as follows. Catalyzes the isomerization between 2-isopropylmalate and 3-isopropylmalate, via the formation of 2-isopropylmaleate. The polypeptide is 3-isopropylmalate dehydratase large subunit (Clostridium beijerinckii (strain ATCC 51743 / NCIMB 8052) (Clostridium acetobutylicum)).